The sequence spans 491 residues: Anthranilate synthase component 1 (491 aa).

L-tryptophan-binding positions include serine 49 and 271–273; that span reads PYL. 306–307 contacts chorismate; that stretch reads GT. Residue glutamate 333 coordinates Mg(2+). Chorismate contacts are provided by residues tyrosine 421, arginine 441, 455–457, and glycine 457; that span reads GAG. Mg(2+) is bound at residue glutamate 470.

This sequence belongs to the anthranilate synthase component I family. As to quaternary structure, heterotetramer consisting of two non-identical subunits: a beta subunit (TrpG) and a large alpha subunit (TrpE). Mg(2+) is required as a cofactor.

The enzyme catalyses chorismate + L-glutamine = anthranilate + pyruvate + L-glutamate + H(+). It participates in amino-acid biosynthesis; L-tryptophan biosynthesis; L-tryptophan from chorismate: step 1/5. Its activity is regulated as follows. Feedback inhibited by tryptophan. Functionally, part of a heterotetrameric complex that catalyzes the two-step biosynthesis of anthranilate, an intermediate in the biosynthesis of L-tryptophan. In the first step, the glutamine-binding beta subunit (TrpG) of anthranilate synthase (AS) provides the glutamine amidotransferase activity which generates ammonia as a substrate that, along with chorismate, is used in the second step, catalyzed by the large alpha subunit of AS (TrpE) to produce anthranilate. In the absence of TrpG, TrpE can synthesize anthranilate directly from chorismate and high concentrations of ammonia. This is Anthranilate synthase component 1 (trpE) from Neisseria meningitidis serogroup B (strain ATCC BAA-335 / MC58).